A 122-amino-acid chain; its full sequence is Small ribosomal subunit protein uS13 (122 aa).

The tract at residues 95-122 is disordered; the sequence is GLPVRGQRTHTNARTRKGPAKPIAGKKK.

This sequence belongs to the universal ribosomal protein uS13 family. Part of the 30S ribosomal subunit. Forms a loose heterodimer with protein S19. Forms two bridges to the 50S subunit in the 70S ribosome.

Located at the top of the head of the 30S subunit, it contacts several helices of the 16S rRNA. In the 70S ribosome it contacts the 23S rRNA (bridge B1a) and protein L5 of the 50S subunit (bridge B1b), connecting the 2 subunits; these bridges are implicated in subunit movement. Contacts the tRNAs in the A and P-sites. This Caulobacter sp. (strain K31) protein is Small ribosomal subunit protein uS13.